We begin with the raw amino-acid sequence, 533 residues long: Dipeptide-binding protein (533 aa).

A signal peptide spans 1–24 (MRKILPLRAWLAAGLILGSPFSHA).

It belongs to the bacterial solute-binding protein 5 family.

The protein localises to the periplasm. Its function is as follows. Binds different dipeptides. Probably bind only L-amino acid containing dipeptides. The sequence is that of Dipeptide-binding protein from Pseudomonas aeruginosa (strain ATCC 15692 / DSM 22644 / CIP 104116 / JCM 14847 / LMG 12228 / 1C / PRS 101 / PAO1).